We begin with the raw amino-acid sequence, 341 residues long: GTP 3',8-cyclase (341 aa).

One can recognise a Radical SAM core domain in the interval 11 to 231; sequence KRNRPLRDLR…DLINKHMPVE (221 aa). Residue Arg-20 participates in GTP binding. Residues Cys-27 and Cys-31 each coordinate [4Fe-4S] cluster. Tyr-33 contacts S-adenosyl-L-methionine. Cys-34 contacts [4Fe-4S] cluster. GTP is bound at residue Arg-75. An S-adenosyl-L-methionine-binding site is contributed by Gly-79. Thr-106 is a GTP binding site. Ser-130 contributes to the S-adenosyl-L-methionine binding site. Residue Lys-167 coordinates GTP. Met-201 contacts S-adenosyl-L-methionine. 2 residues coordinate [4Fe-4S] cluster: Cys-265 and Cys-268. 270-272 is a GTP binding site; it reads RAR. [4Fe-4S] cluster is bound at residue Cys-282.

Belongs to the radical SAM superfamily. MoaA family. In terms of assembly, monomer and homodimer. Requires [4Fe-4S] cluster as cofactor.

The enzyme catalyses GTP + AH2 + S-adenosyl-L-methionine = (8S)-3',8-cyclo-7,8-dihydroguanosine 5'-triphosphate + 5'-deoxyadenosine + L-methionine + A + H(+). It functions in the pathway cofactor biosynthesis; molybdopterin biosynthesis. Its function is as follows. Catalyzes the cyclization of GTP to (8S)-3',8-cyclo-7,8-dihydroguanosine 5'-triphosphate. Required for both nitrate assimilation and respiration. This Bacillus subtilis (strain 168) protein is GTP 3',8-cyclase.